The following is a 380-amino-acid chain: Cytochrome b (380 aa).

Transmembrane regions (helical) follow at residues 28 to 48, 72 to 93, 109 to 129, and 174 to 194; these read IGSLLGLLLAMQIMTGIFLSL, WLVRASHANGASMFFMLMYAHI, WLVGGNDFLLSMATAFLGYVL, and FYSFHFLLPFVILVFVLVHLL. Positions 78 and 92 each coordinate heme b. 2 residues coordinate heme b: H178 and H192. H197 contributes to the a ubiquinone binding site. Helical transmembrane passes span 222-243, 285-305, 317-337, and 344-364; these read WKILWVFVLLCFLLYVLLCYIT, IGGVVALAMSVLYLYTFPLAL, IGQLLFWGYVSLFFLLTWLGA, and YISLALPLTVMFFVVPGLYMI.

Belongs to the cytochrome b family. In terms of assembly, the main subunits of complex b-c1 are: cytochrome b, cytochrome c1 and the Rieske protein. The cofactor is heme b.

The protein resides in the mitochondrion inner membrane. Its function is as follows. Component of the ubiquinol-cytochrome c reductase complex (complex III or cytochrome b-c1 complex) that is part of the mitochondrial respiratory chain. The b-c1 complex mediates electron transfer from ubiquinol to cytochrome c. Contributes to the generation of a proton gradient across the mitochondrial membrane that is then used for ATP synthesis. The chain is Cytochrome b (MT-CYB) from Cepaea nemoralis (Banded wood snail).